Here is a 242-residue protein sequence, read N- to C-terminus: ATP synthase subunit a (242 aa).

Transmembrane regions (helical) follow at residues 29–49 (SSIYMLLASILALTYFYLAFY), 84–104 (FIPLVFSLFIFILFCNLLGMT), 114–134 (IIVTFTLAILVFLIVTIVGFV), 140–160 (FLTLFLPHGTPLWLAPLIIVI), 181–201 (MAGHVLLKVIAGFTVSLMIYL), and 203–223 (FLPIPIMVILIGFEIFVAILQ).

Belongs to the ATPase A chain family. F-type ATPases have 2 components, CF(1) - the catalytic core - and CF(0) - the membrane proton channel. CF(1) has five subunits: alpha(3), beta(3), gamma(1), delta(1), epsilon(1). CF(0) has three main subunits: a(1), b(2) and c(9-12). The alpha and beta chains form an alternating ring which encloses part of the gamma chain. CF(1) is attached to CF(0) by a central stalk formed by the gamma and epsilon chains, while a peripheral stalk is formed by the delta and b chains.

The protein localises to the cell inner membrane. In terms of biological role, key component of the proton channel; it plays a direct role in the translocation of protons across the membrane. This Rickettsia peacockii (strain Rustic) protein is ATP synthase subunit a.